We begin with the raw amino-acid sequence, 132 residues long: Small ribosomal subunit protein uS8 (132 aa).

Belongs to the universal ribosomal protein uS8 family. Part of the 30S ribosomal subunit. Contacts proteins S5 and S12.

In terms of biological role, one of the primary rRNA binding proteins, it binds directly to 16S rRNA central domain where it helps coordinate assembly of the platform of the 30S subunit. In Bartonella tribocorum (strain CIP 105476 / IBS 506), this protein is Small ribosomal subunit protein uS8.